The chain runs to 85 residues: Cell division topological specificity factor (85 aa).

This sequence belongs to the MinE family.

In terms of biological role, prevents the cell division inhibition by proteins MinC and MinD at internal division sites while permitting inhibition at polar sites. This ensures cell division at the proper site by restricting the formation of a division septum at the midpoint of the long axis of the cell. The chain is Cell division topological specificity factor from Thioalkalivibrio sulfidiphilus (strain HL-EbGR7).